Consider the following 322-residue polypeptide: Ferrochelatase (322 aa).

Fe cation contacts are provided by histidine 194 and glutamate 275.

Belongs to the ferrochelatase family.

The protein resides in the cytoplasm. The enzyme catalyses heme b + 2 H(+) = protoporphyrin IX + Fe(2+). The protein operates within porphyrin-containing compound metabolism; protoheme biosynthesis; protoheme from protoporphyrin-IX: step 1/1. Catalyzes the ferrous insertion into protoporphyrin IX. This Yersinia enterocolitica protein is Ferrochelatase.